The primary structure comprises 72 residues: Phaiodotoxin-3 (72 aa).

The LCN-type CS-alpha/beta domain occupies 1–72; sequence KFIRHKDESF…CFGALESKCA (72 aa). 4 disulfides stabilise this stretch: Cys13–Cys38, Cys23–Cys50, Cys27–Cys52, and Cys63–Cys71.

It belongs to the long (4 C-C) scorpion toxin superfamily. Sodium channel inhibitor family. In terms of tissue distribution, expressed by the venom gland.

The protein localises to the secreted. Functionally, sodium channel (Nav) specific neurotoxin. In Anuroctonus phaiodactylus (Mafia scorpion), this protein is Phaiodotoxin-3.